The chain runs to 391 residues: Processive diacylglycerol beta-glucosyltransferase (391 aa).

This sequence belongs to the glycosyltransferase 28 family. UgtP subfamily.

It is found in the cell membrane. The enzyme catalyses a 1,2-diacyl-3-O-(beta-D-glucopyranosyl)-sn-glycerol + UDP-alpha-D-glucose = a 1,2-diacyl-3-O-(beta-D-Glc-(1-&gt;6)-beta-D-Glc)-sn-glycerol + UDP + H(+). It catalyses the reaction a 1,2-diacyl-sn-glycerol + UDP-alpha-D-glucose = a 1,2-diacyl-3-O-(beta-D-glucopyranosyl)-sn-glycerol + UDP + H(+). Its pathway is glycolipid metabolism; diglucosyl-diacylglycerol biosynthesis. Processive glucosyltransferase involved in the biosynthesis of both the bilayer- and non-bilayer-forming membrane glucolipids. Is able to successively transfer two glucosyl residues to diacylglycerol (DAG), thereby catalyzing the formation of beta-monoglucosyl-DAG (3-O-(beta-D-glucopyranosyl)-1,2-diacyl-sn-glycerol) and beta-diglucosyl-DAG (3-O-(beta-D-glucopyranosyl-beta-(1-&gt;6)-D-glucopyranosyl)-1,2-diacyl-sn-glycerol). Beta-diglucosyl-DAG is the predominant glycolipid found in Bacillales and is also used as a membrane anchor for lipoteichoic acid (LTA). In Staphylococcus carnosus (strain TM300), this protein is Processive diacylglycerol beta-glucosyltransferase.